We begin with the raw amino-acid sequence, 404 residues long: MLRWTTAGESHGRALVAMVEGMVAGVHVTTQDISAQLARRRLGYGRGARMKFEQDQVTMLTGLRHGVTLGGPIAIEIGNTEWPKWETVMAPDPVDPAVLADSAARNAPLTRPRPGHADYAGMLKYGFDDARPVLERASARETAARVAAGTVARAFLQQALGVEIVSHVISIGASKPYDGPPPQAADLTAIDASPVRAFDAASEALMIDEIEAAKRDGDTLGGVVEVVAHGLPVGLGSFTSGDNRLDSQLAGAVMGIQAIKGVEIGDGFETARRRGSVAHDEIYPGADGVMRSTNRAGGLEGGMTNGLPVRVRAAMKPISTVPRALATVDMATGEEAVAIHQRSDVCAVPAAAVVVETMVALVLARAVLEKFGGDSLAETRANIDSYLRAVATREPSTDGARASG.

NADP(+)-binding residues include Arg40 and Arg46. Residues 136–138 (RAS), 257–258 (QA), Gly301, 316–320 (KPIST), and Arg342 each bind FMN.

It belongs to the chorismate synthase family. In terms of assembly, homotetramer. FMNH2 is required as a cofactor.

The enzyme catalyses 5-O-(1-carboxyvinyl)-3-phosphoshikimate = chorismate + phosphate. It participates in metabolic intermediate biosynthesis; chorismate biosynthesis; chorismate from D-erythrose 4-phosphate and phosphoenolpyruvate: step 7/7. Functionally, catalyzes the anti-1,4-elimination of the C-3 phosphate and the C-6 proR hydrogen from 5-enolpyruvylshikimate-3-phosphate (EPSP) to yield chorismate, which is the branch point compound that serves as the starting substrate for the three terminal pathways of aromatic amino acid biosynthesis. This reaction introduces a second double bond into the aromatic ring system. This chain is Chorismate synthase, found in Mycolicibacterium vanbaalenii (strain DSM 7251 / JCM 13017 / BCRC 16820 / KCTC 9966 / NRRL B-24157 / PYR-1) (Mycobacterium vanbaalenii).